Consider the following 302-residue polypeptide: Tritrans,polycis-undecaprenyl-diphosphate synthase (geranylgeranyl-diphosphate specific) (302 aa).

Asp33 is a catalytic residue. Residue Asp33 coordinates Mg(2+). Substrate-binding positions include 34-37 and 78-80; these read GNRR and STE. Asn81 (proton acceptor) is an active-site residue. Substrate contacts are provided by residues Phe82, Arg84, Arg203, and 209 to 211; that span reads RTS.

The protein belongs to the UPP synthase family. Homodimer. Mg(2+) serves as cofactor.

The enzyme catalyses geranylgeranyl diphosphate + 7 isopentenyl diphosphate = tri-trans,hepta-cis-undecaprenyl diphosphate + 7 diphosphate. Its function is as follows. Catalyzes the sequential condensation of isopentenyl diphosphate (IPP) with geranylgeranyl diphosphate (GGPP) to yield (2Z,6Z,10Z,14Z,18Z,22Z,26Z,30E,34E,38E)-undecaprenyl diphosphate (tritrans,heptacis-UPP). It is probably the precursor of glycosyl carrier lipids. The chain is Tritrans,polycis-undecaprenyl-diphosphate synthase (geranylgeranyl-diphosphate specific) from Halobacterium salinarum (strain ATCC 700922 / JCM 11081 / NRC-1) (Halobacterium halobium).